The following is a 581-amino-acid chain: Ketol-acid reductoisomerase, chloroplastic (581 aa).

Residues 1–50 constitute a chloroplast transit peptide; sequence MAAVTSSCSTAISASSKTLAKPVAASFAPTNLSFSKLSPQSIRARRSITV. The KARI N-terminal Rossmann domain occupies 92 to 290; that stretch reads VRGGRDLFHL…ALGSPFTFAT (199 aa). Residues 113 to 120, 146 to 151, and 185 to 189 each bind NADP(+); these read GVIGWGSQ, RKGSSS, and SDSAQ. Histidine 210 is an active-site residue. 2 consecutive KARI C-terminal knotted domains span residues 291–439 and 440–576; these read TLEQ…RPAG and DLGP…RPEL. Aspartate 299, glutamate 303, glutamate 476, and glutamate 480 together coordinate Mg(2+). Serine 502 contacts substrate.

The protein belongs to the ketol-acid reductoisomerase family. Homodimer. Mg(2+) serves as cofactor.

The protein resides in the plastid. The protein localises to the chloroplast. The enzyme catalyses (2R)-2,3-dihydroxy-3-methylbutanoate + NADP(+) = (2S)-2-acetolactate + NADPH + H(+). It carries out the reaction (2R,3R)-2,3-dihydroxy-3-methylpentanoate + NADP(+) = (S)-2-ethyl-2-hydroxy-3-oxobutanoate + NADPH + H(+). It functions in the pathway amino-acid biosynthesis; L-isoleucine biosynthesis; L-isoleucine from 2-oxobutanoate: step 2/4. The protein operates within amino-acid biosynthesis; L-valine biosynthesis; L-valine from pyruvate: step 2/4. This Pisum sativum (Garden pea) protein is Ketol-acid reductoisomerase, chloroplastic (PGAAIR).